The chain runs to 142 residues: Putative nickel-responsive regulator (142 aa).

The Ni(2+) site is built by His-77, His-88, His-90, and Cys-96.

It belongs to the transcriptional regulatory CopG/NikR family. In terms of assembly, homotetramer. Ni(2+) is required as a cofactor.

Transcriptional regulator. This Halobacterium salinarum (strain ATCC 700922 / JCM 11081 / NRC-1) (Halobacterium halobium) protein is Putative nickel-responsive regulator.